Here is a 773-residue protein sequence, read N- to C-terminus: Phenylalanine--tRNA ligase beta subunit (773 aa).

The tRNA-binding domain occupies 39-150; that stretch reads LKAPDKVVVG…GKLELGRPLN (112 aa). Positions 391–467 constitute a B5 domain; sequence KELPIIPISI…RIIGIDNIAS (77 aa). 4 residues coordinate Mg(2+): D445, D451, E454, and E455. The region spanning 682–773 is the FDX-ACB domain; it reads SKFPAITRDL…TLKNLGLDLR (92 aa).

It belongs to the phenylalanyl-tRNA synthetase beta subunit family. Type 1 subfamily. Tetramer of two alpha and two beta subunits. Requires Mg(2+) as cofactor.

It localises to the cytoplasm. It catalyses the reaction tRNA(Phe) + L-phenylalanine + ATP = L-phenylalanyl-tRNA(Phe) + AMP + diphosphate + H(+). The polypeptide is Phenylalanine--tRNA ligase beta subunit (pheT) (Campylobacter jejuni subsp. jejuni serotype O:2 (strain ATCC 700819 / NCTC 11168)).